The primary structure comprises 217 residues: MSNSGHPKDRGNRRGLMLVLSSPSGAGKTTLSRMLLEEFGDVKLSISATTRPPRPNEVHGEDYYFKTPDEFHRMIERREFLEWAHVFDKHYGTPKADTVARLEAGEDVLFDVDWQGADALHDQMPNDVVSVFILPPSIEALQARLMGRPGSTPELVARRMEDAKREIMHWRRYDYVIVNDDLNVAYQRLKRILLVERLKRLRQIDLEDHVRALLGEA.

The Guanylate kinase-like domain maps to 15 to 194 (GLMLVLSSPS…AYQRLKRILL (180 aa)). 22–29 (SPSGAGKT) provides a ligand contact to ATP.

Belongs to the guanylate kinase family.

The protein localises to the cytoplasm. It catalyses the reaction GMP + ATP = GDP + ADP. In terms of biological role, essential for recycling GMP and indirectly, cGMP. The protein is Guanylate kinase of Hyphomonas neptunium (strain ATCC 15444).